A 305-amino-acid chain; its full sequence is tRNA uridine(34) hydroxylase (305 aa).

The 96-residue stretch at 124 to 219 (QDEETLVVDT…YLETIPKEES (96 aa)) folds into the Rhodanese domain. C179 acts as the Cysteine persulfide intermediate in catalysis.

Belongs to the TrhO family.

The enzyme catalyses uridine(34) in tRNA + AH2 + O2 = 5-hydroxyuridine(34) in tRNA + A + H2O. In terms of biological role, catalyzes oxygen-dependent 5-hydroxyuridine (ho5U) modification at position 34 in tRNAs. This Bartonella bacilliformis (strain ATCC 35685 / KC583 / Herrer 020/F12,63) protein is tRNA uridine(34) hydroxylase.